The primary structure comprises 225 residues: Imidazoleglycerol-phosphate dehydratase (225 aa).

Belongs to the imidazoleglycerol-phosphate dehydratase family.

It catalyses the reaction D-erythro-1-(imidazol-4-yl)glycerol 3-phosphate = 3-(imidazol-4-yl)-2-oxopropyl phosphate + H2O. It participates in amino-acid biosynthesis; L-histidine biosynthesis; L-histidine from 5-phospho-alpha-D-ribose 1-diphosphate: step 6/9. The chain is Imidazoleglycerol-phosphate dehydratase (PTH3) from Pyricularia oryzae (strain 70-15 / ATCC MYA-4617 / FGSC 8958) (Rice blast fungus).